The primary structure comprises 360 residues: Tryptophan--tRNA ligase, mitochondrial (360 aa).

The transit peptide at 1–18 (MALFSVRKARECWRFIRA) directs the protein to the mitochondrion. Residues Gln-42 and 48-51 (HLGN) contribute to the ATP site. Position 167 (Asp-167) interacts with L-tryptophan. ATP contacts are provided by residues 179–181 (GED), Val-217, and 226–230 (KMSKS).

Belongs to the class-I aminoacyl-tRNA synthetase family.

The protein localises to the mitochondrion matrix. It is found in the mitochondrion. The enzyme catalyses tRNA(Trp) + L-tryptophan + ATP = L-tryptophyl-tRNA(Trp) + AMP + diphosphate + H(+). Catalyzes the attachment of tryptophan to tRNA(Trp) in a two-step reaction: tryptophan is first activated by ATP to form Trp-AMP and then transferred to the acceptor end of tRNA(Trp). This chain is Tryptophan--tRNA ligase, mitochondrial (Wars2), found in Mus musculus (Mouse).